A 228-amino-acid chain; its full sequence is Calcyclin-binding protein (228 aa).

Ala-2 carries the N-acetylalanine modification. Positions 2-80 (ASEELQKDLE…YTVKISNYGW (79 aa)) are interaction with SIAH1. Ser-3 is modified (phosphoserine). An N6-acetyllysine mark is found at Lys-8 and Lys-19. Ser-34 carries the phosphoserine modification. In terms of domain architecture, CS spans 73-167 (VKISNYGWDQ…VENTRWDYLT (95 aa)). Residues 73–228 (VKISNYGWDQ…EKQAKGDTEF (156 aa)) are interaction with SKP1. Residues Lys-85 and Lys-118 each carry the N6-acetyllysine modification. An interaction with S100A6 region spans residues 154-228 (CRKKVENTRW…EKQAKGDTEF (75 aa)). Positions 168–228 (QVEKECKEKE…EKQAKGDTEF (61 aa)) constitute an SGS domain.

Component of some large E3 complex at least composed of UBE2D1, SIAH1, CACYBP/SIP, SKP1, APC and TBL1X. Interacts directly with SIAH1, SIAH2 and SKP1. Interacts with protein of the S100 family S100A1, S100A6, S100B, S100P and S100A12 in a calcium-dependent manner. Phosphorylated on serine residues. Phosphorylated upon induction by RA or at high calcium concentrations.

The protein resides in the nucleus. The protein localises to the cytoplasm. Functionally, may be involved in calcium-dependent ubiquitination and subsequent proteasomal degradation of target proteins. Probably serves as a molecular bridge in ubiquitin E3 complexes. Participates in the ubiquitin-mediated degradation of beta-catenin (CTNNB1). This is Calcyclin-binding protein (CACYBP) from Macaca fascicularis (Crab-eating macaque).